We begin with the raw amino-acid sequence, 582 residues long: Type I secretion system ATP-binding protein PrsD (582 aa).

A run of 3 helical transmembrane segments spans residues 22–42 (FIGV…GSFF), 59–79 (LIAL…FELI), and 148–168 (IAIC…GGLI). Residues 22-301 (FIGVGVASAL…AIGNWRGLVA (280 aa)) form the ABC transmembrane type-1 domain. An ABC transporter domain is found at 332-568 (LTVEGLASGP…VLRPQQVERQ (237 aa)). 366-373 (GPSASGKS) provides a ligand contact to ATP.

The protein belongs to the ABC transporter superfamily. As to quaternary structure, part of a type I secretion system composed of PrsD and PrsE.

It is found in the cell inner membrane. In terms of biological role, mediates secretion of glycanase ExsH. The protein is Type I secretion system ATP-binding protein PrsD (prsD) of Rhizobium meliloti (strain 1021) (Ensifer meliloti).